The following is a 208-amino-acid chain: Harpin secretion protein HrpW (208 aa).

4 helical membrane-spanning segments follow: residues 2–22, 46–66, 149–169, and 176–196; these read LALF…CTAF, ALYG…AHDI, IGFL…NLLL, and VSPM…VSGW.

Belongs to the FliP/MopC/SpaP family.

The protein localises to the cell membrane. Required for the secretion of harpin. This Pseudomonas syringae pv. syringae protein is Harpin secretion protein HrpW (hrpW).